A 106-amino-acid chain; its full sequence is ATP-dependent Clp protease adapter protein ClpS (106 aa).

A compositionally biased stretch (basic and acidic residues) spans 1–13 (MPRNTSHEHDHGL). Residues 1–20 (MPRNTSHEHDHGLMVEASKP) are disordered.

The protein belongs to the ClpS family. As to quaternary structure, binds to the N-terminal domain of the chaperone ClpA.

In terms of biological role, involved in the modulation of the specificity of the ClpAP-mediated ATP-dependent protein degradation. This Xanthomonas axonopodis pv. citri (strain 306) protein is ATP-dependent Clp protease adapter protein ClpS.